A 317-amino-acid chain; its full sequence is MKI67 FHA domain-interacting nucleolar phosphoprotein (317 aa).

A2 bears the N-acetylalanine mark. K40 is covalently cross-linked (Glycyl lysine isopeptide (Lys-Gly) (interchain with G-Cter in SUMO2)). The 79-residue stretch at 47 to 125 (GVVYLGHLPS…RLLSCKFMPR (79 aa)) folds into the RRM domain. At R116 the chain carries Omega-N-methylarginine. Residues K181 and K194 each participate in a glycyl lysine isopeptide (Lys-Gly) (interchain with G-Cter in SUMO2) cross-link. R203 bears the Citrulline mark. The segment at 203-317 (RDSEGNQVLP…KRPRKRKSKQ (115 aa)) is disordered. A compositionally biased stretch (basic and acidic residues) spans 213–233 (DQKEGLSGEPRRKEKMMKEDI). S219 is subject to Phosphoserine. The segment covering 238–248 (PKKRKRSRRKK) has biased composition (basic residues). S253 is modified (phosphoserine). Phosphothreonine is present on residues T257 and T261. Positions 265–284 (LERRKSQVMEVGGDKDDEII) are enriched in basic and acidic residues. 2 positions are modified to omega-N-methylated arginine: R267 and R268. Residue S270 is modified to Phosphoserine. Residue K293 forms a Glycyl lysine isopeptide (Lys-Gly) (interchain with G-Cter in SUMO1); alternate linkage. Residue K293 forms a Glycyl lysine isopeptide (Lys-Gly) (interchain with G-Cter in SUMO2); alternate linkage. T301 carries the post-translational modification Phosphothreonine. Residues 308–317 (KRPRKRKSKQ) are compositionally biased toward basic residues.

As to quaternary structure, binds to the FHA domain of MKI67; this interaction is enhanced in mitosis. Phosphorylated. In terms of processing, citrullinated by PADI4. Expressed in brain, heart, hind limb muscles, intestine, liver, skin and spleen.

Its subcellular location is the nucleus. The protein localises to the nucleolus. The protein resides in the chromosome. The sequence is that of MKI67 FHA domain-interacting nucleolar phosphoprotein (Nifk) from Mus musculus (Mouse).